The following is a 255-amino-acid chain: Putative enoyl-CoA hydratase/isomerase YhaR (255 aa).

2 consecutive transmembrane segments (helical) span residues 96-116 (VTIA…ALCA) and 126-146 (VLAM…HYLL).

The protein belongs to the enoyl-CoA hydratase/isomerase family.

The protein localises to the cell membrane. The sequence is that of Putative enoyl-CoA hydratase/isomerase YhaR (yhaR) from Bacillus subtilis (strain 168).